A 150-amino-acid polypeptide reads, in one-letter code: UPF0506 protein SJCHGC02380 (150 aa).

An N-terminal signal peptide occupies residues 1-18; sequence MNTCIQLLILCLVTVINS. N-linked (GlcNAc...) asparagine glycans are attached at residues N20, N24, N36, N48, N52, and N110. Disulfide bonds link C116–C130, C123–C134, and C129–C139.

Belongs to the UPF0506 family.

It is found in the secreted. The sequence is that of UPF0506 protein SJCHGC02380 from Schistosoma japonicum (Blood fluke).